A 103-amino-acid chain; its full sequence is Co-chaperonin GroES (103 aa).

The disordered stretch occupies residues 31–67 (GGILLPDTAKEKPQVGEVAQVGPGKRNEDGSRQSPEV).

This sequence belongs to the GroES chaperonin family. As to quaternary structure, heptamer of 7 subunits arranged in a ring. Interacts with the chaperonin GroEL.

It localises to the cytoplasm. Together with the chaperonin GroEL, plays an essential role in assisting protein folding. The GroEL-GroES system forms a nano-cage that allows encapsulation of the non-native substrate proteins and provides a physical environment optimized to promote and accelerate protein folding. GroES binds to the apical surface of the GroEL ring, thereby capping the opening of the GroEL channel. In Prochlorococcus marinus (strain NATL2A), this protein is Co-chaperonin GroES.